The primary structure comprises 445 residues: Tol-Pal system protein TolB (445 aa).

An N-terminal signal peptide occupies residues 1-26 (MLNRRNFIRTTSALAASTALPGYAFG).

This sequence belongs to the TolB family. The Tol-Pal system is composed of five core proteins: the inner membrane proteins TolA, TolQ and TolR, the periplasmic protein TolB and the outer membrane protein Pal. They form a network linking the inner and outer membranes and the peptidoglycan layer.

The protein localises to the periplasm. Its function is as follows. Part of the Tol-Pal system, which plays a role in outer membrane invagination during cell division and is important for maintaining outer membrane integrity. In Jannaschia sp. (strain CCS1), this protein is Tol-Pal system protein TolB.